Here is a 104-residue protein sequence, read N- to C-terminus: Large ribosomal subunit protein bL21 (104 aa).

Belongs to the bacterial ribosomal protein bL21 family. As to quaternary structure, part of the 50S ribosomal subunit. Contacts protein L20.

Its function is as follows. This protein binds to 23S rRNA in the presence of protein L20. The sequence is that of Large ribosomal subunit protein bL21 from Streptococcus sanguinis (strain SK36).